The chain runs to 113 residues: Transmembrane protein 256 (113 aa).

An N-terminal signal peptide occupies residues 1–29; it reads MAGVGAAFRRLGALSGAGALGLASYGAHG. Residues 30-63 lie on the Extracellular side of the membrane; it reads AQFPDAYGKELFDKANKHHFLHSLALLGVPSCRK. The residue at position 43 (lysine 43) is an N6-acetyllysine. The chain crosses the membrane as a helical span at residues 64 to 84; that stretch reads PVWAGLLLASGTTLFCTSFYY. Topologically, residues 85 to 92 are cytoplasmic; that stretch reads QALSGDTS. Residues 93 to 113 traverse the membrane as a helical segment; it reads IQTLGPVGGSLLILGWLALAF.

The protein belongs to the TMEM256 family.

Its subcellular location is the membrane. The protein is Transmembrane protein 256 (Tmem256) of Mus musculus (Mouse).